A 130-amino-acid chain; its full sequence is Small ribosomal subunit protein uS9 (130 aa).

The disordered stretch occupies residues 102-130 (GFLTRDPRKKERKKYGLKKARKSPQFSKR). Residues 111–130 (KERKKYGLKKARKSPQFSKR) are compositionally biased toward basic residues.

Belongs to the universal ribosomal protein uS9 family.

The protein is Small ribosomal subunit protein uS9 of Finegoldia magna (strain ATCC 29328 / DSM 20472 / WAL 2508) (Peptostreptococcus magnus).